A 342-amino-acid polypeptide reads, in one-letter code: Predicted GPI-anchored protein 54 (342 aa).

Residues 1–16 (MRANYLLLLAATAVQA) form the signal peptide. Asparagine 25, asparagine 105, and asparagine 151 each carry an N-linked (GlcNAc...) asparagine glycan. The GPI-anchor amidated glycine moiety is linked to residue glycine 314. The propeptide at 315-342 (ASQSHPISSYSNYTISDYAPPISSYYSL) is removed in mature form. A glycan (N-linked (GlcNAc...) asparagine) is linked at asparagine 326.

It localises to the cell membrane. This Candida albicans (strain SC5314 / ATCC MYA-2876) (Yeast) protein is Predicted GPI-anchored protein 54 (PGA54).